The chain runs to 228 residues: Orotate phosphoribosyltransferase (228 aa).

Residue Lys26 coordinates 5-phospho-alpha-D-ribose 1-diphosphate. 34 to 35 contributes to the orotate binding site; that stretch reads FF. Residues 72-73, Arg98, Lys99, Lys102, His104, and 123-131 each bind 5-phospho-alpha-D-ribose 1-diphosphate; these read YK and DDVISAGTS. Positions 127 and 155 each coordinate orotate.

Belongs to the purine/pyrimidine phosphoribosyltransferase family. PyrE subfamily. Homodimer. It depends on Mg(2+) as a cofactor.

It carries out the reaction orotidine 5'-phosphate + diphosphate = orotate + 5-phospho-alpha-D-ribose 1-diphosphate. The protein operates within pyrimidine metabolism; UMP biosynthesis via de novo pathway; UMP from orotate: step 1/2. In terms of biological role, catalyzes the transfer of a ribosyl phosphate group from 5-phosphoribose 1-diphosphate to orotate, leading to the formation of orotidine monophosphate (OMP). This chain is Orotate phosphoribosyltransferase, found in Nitrosospira multiformis (strain ATCC 25196 / NCIMB 11849 / C 71).